We begin with the raw amino-acid sequence, 466 residues long: MSANQDYIVADIGLADFGRKEIAIAETEMPGLMACREEFGASKPLKGARITGSLHMTIQTAVLIETLVALGAEVRWASCNIFSTQDHAAAAIAASGVPVFAVKGETLEEYWTYTDKIFQWADGGVSNMILDDGGDATMYILLGARAEAGENILINPGSEEEEILFAQIKKRLAATPGWFTKQRDAIKGVTEETTTGVNRLYQLQAKGLLPFPAINVNDSVTKSKFDNKYGCKESLVDGIRRGTDVMMAGKVAVVCGYGDVGKGSAASLSGAGARVKVTEVDPICALQAAMDGYEVVQLEDVVSSADIFITTTGNKDVIRIEHMRAMKDMAIVGNIGHFDNEIQVSALRNLKWTNVKPQVDLIEFPKGNRIILLSEGRLLNLGNATGHPSFVMSASFSNQVLAQIELFTKGENYKNEVYVLPKQLDEKVARLHLAKLGAKLTELSEEQAAYIGVKAQGPFKAEHYRY.

Positions 57, 132, and 192 each coordinate substrate. 193–195 is a binding site for NAD(+); the sequence is TTT. Substrate contacts are provided by lysine 222 and aspartate 226. Residues asparagine 227, 256–261, glutamate 279, asparagine 314, 335–337, and asparagine 380 contribute to the NAD(+) site; these read GYGDVG and IGH.

The protein belongs to the adenosylhomocysteinase family. NAD(+) serves as cofactor.

It is found in the cytoplasm. It carries out the reaction S-adenosyl-L-homocysteine + H2O = L-homocysteine + adenosine. The protein operates within amino-acid biosynthesis; L-homocysteine biosynthesis; L-homocysteine from S-adenosyl-L-homocysteine: step 1/1. Functionally, may play a key role in the regulation of the intracellular concentration of adenosylhomocysteine. The sequence is that of Adenosylhomocysteinase from Sinorhizobium medicae (strain WSM419) (Ensifer medicae).